We begin with the raw amino-acid sequence, 402 residues long: Phosphopentomutase (402 aa).

Residues aspartate 10, aspartate 301, histidine 306, aspartate 342, histidine 343, and histidine 354 each coordinate Mn(2+).

It belongs to the phosphopentomutase family. It depends on Mn(2+) as a cofactor.

The protein localises to the cytoplasm. The catalysed reaction is 2-deoxy-alpha-D-ribose 1-phosphate = 2-deoxy-D-ribose 5-phosphate. The enzyme catalyses alpha-D-ribose 1-phosphate = D-ribose 5-phosphate. It participates in carbohydrate degradation; 2-deoxy-D-ribose 1-phosphate degradation; D-glyceraldehyde 3-phosphate and acetaldehyde from 2-deoxy-alpha-D-ribose 1-phosphate: step 1/2. In terms of biological role, isomerase that catalyzes the conversion of deoxy-ribose 1-phosphate (dRib-1-P) and ribose 1-phosphate (Rib-1-P) to deoxy-ribose 5-phosphate (dRib-5-P) and ribose 5-phosphate (Rib-5-P), respectively. The chain is Phosphopentomutase from Aeromonas hydrophila subsp. hydrophila (strain ATCC 7966 / DSM 30187 / BCRC 13018 / CCUG 14551 / JCM 1027 / KCTC 2358 / NCIMB 9240 / NCTC 8049).